Here is a 202-residue protein sequence, read N- to C-terminus: MDKFVKLTGVAAPLPVVNIDTDMIIPKDYLKTIKRTGLGKGLFAEARYNEDGSENPDFVLNKPAYRDAKILVAGDNFGCGSSREHAPWALLDFGIRCVISTSFADIFYNNCFKNGILPIKVSQENLDKLMDDASRGSNAILTVDLENLEITGPDGGSIKFDLDEFKRHCLLNGLDDIGLTLEKGKAIDEFEKKNAASHPWAA.

Belongs to the LeuD family. LeuD type 1 subfamily. Heterodimer of LeuC and LeuD.

The enzyme catalyses (2R,3S)-3-isopropylmalate = (2S)-2-isopropylmalate. Its pathway is amino-acid biosynthesis; L-leucine biosynthesis; L-leucine from 3-methyl-2-oxobutanoate: step 2/4. In terms of biological role, catalyzes the isomerization between 2-isopropylmalate and 3-isopropylmalate, via the formation of 2-isopropylmaleate. The polypeptide is 3-isopropylmalate dehydratase small subunit (Rhizobium etli (strain ATCC 51251 / DSM 11541 / JCM 21823 / NBRC 15573 / CFN 42)).